We begin with the raw amino-acid sequence, 38 residues long: Large ribosomal subunit protein bL36 (38 aa).

It belongs to the bacterial ribosomal protein bL36 family.

This is Large ribosomal subunit protein bL36 from Limosilactobacillus fermentum (strain NBRC 3956 / LMG 18251) (Lactobacillus fermentum).